The primary structure comprises 359 residues: MLELNFSQQLGDLHLQVATDLPAQGITAIFGLSGAGKTSLINVIGGLTRPQQGRVILNGRVLVDAEKNIYLPPEKRRVGYVFQDARLFPHYRVRGNLQYGMAASMRGQFDAIVGLLGIEPLLNRFPFTLSGGEKQRVAIGRALLTAPELLLMDEPLASLDLPRKRELLPYLERLAQDVNTPILYVSHSMDEILRLADQVVVMDAGKVRAVGGLEEVWASSALRPWLQREEPSSILRVSVIGHHDRYAMTALALGDQRLWVGKLDAAEGNSMRIRINAADVSLALQPPHSSSIRNILPVKVAECLDVGGQVDVKLAIGEQWLWARITPWARDELGLKPGQWVYAQIKSVSFNRQNGPVPD.

One can recognise an ABC transporter domain in the interval 1–229; sequence MLELNFSQQL…SALRPWLQRE (229 aa). Residue 31–38 coordinates ATP; sequence GLSGAGKT. The region spanning 289 to 354 is the Mop domain; the sequence is SSSIRNILPV…IKSVSFNRQN (66 aa).

Belongs to the ABC transporter superfamily. Molybdate importer (TC 3.A.1.8) family. The complex is composed of two ATP-binding proteins (ModC), two transmembrane proteins (ModB) and a solute-binding protein (ModA).

Its subcellular location is the cell inner membrane. It catalyses the reaction molybdate(out) + ATP + H2O = molybdate(in) + ADP + phosphate + H(+). Its function is as follows. Part of the ABC transporter complex ModABC involved in molybdenum import. Responsible for energy coupling to the transport system. This is Molybdenum import ATP-binding protein ModC from Yersinia pseudotuberculosis serotype I (strain IP32953).